A 502-amino-acid polypeptide reads, in one-letter code: Lysine--tRNA ligase (502 aa).

Residues E410 and E417 each coordinate Mg(2+).

This sequence belongs to the class-II aminoacyl-tRNA synthetase family. In terms of assembly, homodimer. Mg(2+) serves as cofactor.

The protein localises to the cytoplasm. The enzyme catalyses tRNA(Lys) + L-lysine + ATP = L-lysyl-tRNA(Lys) + AMP + diphosphate. This Photobacterium profundum (strain SS9) protein is Lysine--tRNA ligase.